Consider the following 548-residue polypeptide: 2-succinyl-5-enolpyruvyl-6-hydroxy-3-cyclohexene-1-carboxylate synthase (548 aa).

The protein belongs to the TPP enzyme family. MenD subfamily. In terms of assembly, homodimer. The cofactor is Mg(2+). Mn(2+) is required as a cofactor. It depends on thiamine diphosphate as a cofactor.

The catalysed reaction is isochorismate + 2-oxoglutarate + H(+) = 5-enolpyruvoyl-6-hydroxy-2-succinyl-cyclohex-3-ene-1-carboxylate + CO2. The protein operates within quinol/quinone metabolism; 1,4-dihydroxy-2-naphthoate biosynthesis; 1,4-dihydroxy-2-naphthoate from chorismate: step 2/7. Its pathway is quinol/quinone metabolism; menaquinone biosynthesis. Functionally, catalyzes the thiamine diphosphate-dependent decarboxylation of 2-oxoglutarate and the subsequent addition of the resulting succinic semialdehyde-thiamine pyrophosphate anion to isochorismate to yield 2-succinyl-5-enolpyruvyl-6-hydroxy-3-cyclohexene-1-carboxylate (SEPHCHC). The polypeptide is 2-succinyl-5-enolpyruvyl-6-hydroxy-3-cyclohexene-1-carboxylate synthase (Mycobacterium marinum (strain ATCC BAA-535 / M)).